Here is a 551-residue protein sequence, read N- to C-terminus: ATPase expression protein 2, mitochondrial (551 aa).

The tract at residues 530 to 551 is disordered; it reads AQKAQKRFDDEEEDSMLLGRLW.

It belongs to the AEP2 family. As to quaternary structure, binds to the 5'UTR of the OLI1 mRNA.

The protein resides in the mitochondrion. Its function is as follows. Required for translation of the mitochondrial OLI1 transcript coding for the mitochondrial ATP synthase subunit 9. The polypeptide is ATPase expression protein 2, mitochondrial (AEP2) (Lachancea thermotolerans (strain ATCC 56472 / CBS 6340 / NRRL Y-8284) (Yeast)).